A 134-amino-acid polypeptide reads, in one-letter code: Ribonuclease VapC (134 aa).

The 121-residue stretch at 4–124 (IVDTSIIIAL…NTKDFKRIPE (121 aa)) folds into the PINc domain. Asp-6 contributes to the Mg(2+) binding site.

Belongs to the PINc/VapC protein family. It depends on Mg(2+) as a cofactor.

Its function is as follows. Toxic component of a type II toxin-antitoxin (TA) system. Has ssRNase activity. Its RNase activity is partially neutralized by cognate antitoxin VapB. Rapidly induces apoptosis upon microinjection into mouse fibroblasts (L929 line). Probably contributes to host cell death if bacterial cell lysis occurs during host infection. This chain is Ribonuclease VapC, found in Rickettsia bellii (strain RML369-C).